Here is a 209-residue protein sequence, read N- to C-terminus: 2-phospho-L-lactate guanylyltransferase (209 aa).

It belongs to the CofC family. As to quaternary structure, homodimer.

The enzyme catalyses (2S)-2-phospholactate + GTP + H(+) = (2S)-lactyl-2-diphospho-5'-guanosine + diphosphate. It functions in the pathway cofactor biosynthesis; coenzyme F420 biosynthesis. Its function is as follows. Guanylyltransferase that catalyzes the activation of (2S)-2-phospholactate (2-PL) as (2S)-lactyl-2-diphospho-5'-guanosine, via the condensation of 2-PL with GTP. It is involved in the biosynthesis of coenzyme F420, a hydride carrier cofactor. This Methanosphaerula palustris (strain ATCC BAA-1556 / DSM 19958 / E1-9c) protein is 2-phospho-L-lactate guanylyltransferase.